The chain runs to 139 residues: Large ribosomal subunit protein uL16 (139 aa).

Residues Met1–Lys11 are compositionally biased toward basic residues. The tract at residues Met1–Phe30 is disordered.

This sequence belongs to the universal ribosomal protein uL16 family. In terms of assembly, part of the 50S ribosomal subunit.

Its function is as follows. Binds 23S rRNA and is also seen to make contacts with the A and possibly P site tRNAs. The sequence is that of Large ribosomal subunit protein uL16 from Mycoplasmopsis synoviae (strain 53) (Mycoplasma synoviae).